Here is a 1419-residue protein sequence, read N- to C-terminus: L-2-aminoadipate reductase (1419 aa).

In terms of domain architecture, Carrier spans 880-956; that stretch reads ETLTATERDI…GLAKEIERMK (77 aa). At S916 the chain carries O-(pantetheine 4'-phosphoryl)serine.

Belongs to the ATP-dependent AMP-binding enzyme family. The cofactor is pantetheine 4'-phosphate.

Its subcellular location is the cytoplasm. The catalysed reaction is (S)-2-amino-6-oxohexanoate + NADP(+) + H2O = L-2-aminoadipate + NADPH + 2 H(+). The enzyme catalyses (S)-2-amino-6-oxohexanoate + NAD(+) + H2O = L-2-aminoadipate + NADH + 2 H(+). It carries out the reaction (S)-2-amino-6-oxohexanoate + AMP + diphosphate + NADP(+) = L-2-aminoadipate + ATP + NADPH + H(+). The protein operates within amino-acid biosynthesis; L-lysine biosynthesis via AAA pathway; L-lysine from L-alpha-aminoadipate (fungal route): step 1/3. Catalyzes the activation of alpha-aminoadipate by ATP-dependent adenylation and the reduction of activated alpha-aminoadipate by NADPH. The activated alpha-aminoadipate is bound to the phosphopantheinyl group of the enzyme itself before it is reduced to (S)-2-amino-6-oxohexanoate. This is L-2-aminoadipate reductase (lys1) from Schizosaccharomyces pombe (strain 972 / ATCC 24843) (Fission yeast).